Here is a 210-residue protein sequence, read N- to C-terminus: Chaperone protein TorD (210 aa).

Belongs to the TorD/DmsD family. TorD subfamily.

The protein localises to the cytoplasm. In terms of biological role, involved in the biogenesis of TorA. Acts on TorA before the insertion of the molybdenum cofactor and, as a result, probably favors a conformation of the apoenzyme that is competent for acquiring the cofactor. The protein is Chaperone protein TorD of Salmonella arizonae (strain ATCC BAA-731 / CDC346-86 / RSK2980).